The chain runs to 145 residues: uncharacterized protein (145 aa).

The protein resides in the mitochondrion. This is an uncharacterized protein from Arabidopsis thaliana (Mouse-ear cress).